We begin with the raw amino-acid sequence, 378 residues long: Probable endopolygalacturonase E (378 aa).

A signal peptide spans 1 to 19; the sequence is MVTSSSVIVLTLWAALVSA. Residues 20–38 constitute a propeptide that is removed on maturation; it reads SPVADPLVTPAPKLEDLEK. Cysteines 43 and 61 form a disulfide. PbH1 repeat units lie at residues 103–125, 174–204, and 205–226; these read GPLVSVSGTDITVTGADGAYLNG, STYLTMEDITIDNTDGDDGEAANTDGFDIGD, and STYITITGANVYNQDDCVAVNS. The Proton donor role is filled by Asp219. The cysteines at positions 221 and 237 are disulfide-linked. The active site involves His241. PbH1 repeat units follow at residues 256–277, 285–307, and 317–345; these read VKNVTFYDSEIKSSQNGVRIKT, VSEVTYKEITLSDITDYGIVVEQ, and TDGITIEDFVLDNVQGSVESSGTNIYIVC. Asn258 carries N-linked (GlcNAc...) asparagine glycosylation. 2 disulfide bridges follow: Cys345-Cys350 and Cys369-Cys378.

The protein belongs to the glycosyl hydrolase 28 family.

It localises to the secreted. It catalyses the reaction (1,4-alpha-D-galacturonosyl)n+m + H2O = (1,4-alpha-D-galacturonosyl)n + (1,4-alpha-D-galacturonosyl)m.. Functionally, involved in maceration and soft-rotting of plant tissue. Hydrolyzes the 1,4-alpha glycosidic bonds of de-esterified pectate in the smooth region of the plant cell wall. The sequence is that of Probable endopolygalacturonase E (pgaE) from Aspergillus niger (strain ATCC MYA-4892 / CBS 513.88 / FGSC A1513).